The following is a 581-amino-acid chain: MPKQLSFSNESREALEKGINTVANAVKVTIGPKAKNVVIERKFGSPDIVRDGSTVAKEINLDNPISNLGAKLIEQVASKTKESAGDGTTTATILTQIMVQEGLKNIAAGASPIELKKGMEKGLNFVLEKLRSKSIKINGSDIKKVATVSAGGDEDIGSIISKAMDIVTSDGVITVEESQSLETELDITEGMSFDRGYSSPYFVTDQERQICELENPKILITDQKISTLTNLVPILEEVQKSASPFLILAEDIEGEALTTLVLNKNSGVLNVSAVRAPSFGERRKAALEDIAILTGAKLISEDQSMKLEEVTLNDLGKAKKITISKDKTTIVAFDDTKDLVQERVEKLKREVEITESEYDKDKINERIAKLAGGVALIKVGAATETEMKYKKLRIEDSLNATKAAIEEGVVSGGGQTLIEISNELSNSRKEISDDLTTGIDIITNALLEPTKQIAKNAGFNGDVVIADIKRLGKGFNANNGEYENLNESGILDPTKVIRLALQDSVSIAAMIITTEVAVADIPEPEAAPGGPGADPMGGMGGMGGMGGMGGMGMPGMGGMGMPGMGGMGMPGMGGMGMPGMM.

ATP is bound by residues 29–32, 86–90, G413, and D492; these read TIGP and DGTTT.

The protein belongs to the chaperonin (HSP60) family. Forms a cylinder of 14 subunits composed of two heptameric rings stacked back-to-back. Interacts with the co-chaperonin GroES.

Its subcellular location is the cytoplasm. It catalyses the reaction ATP + H2O + a folded polypeptide = ADP + phosphate + an unfolded polypeptide.. Its function is as follows. Together with its co-chaperonin GroES, plays an essential role in assisting protein folding. The GroEL-GroES system forms a nano-cage that allows encapsulation of the non-native substrate proteins and provides a physical environment optimized to promote and accelerate protein folding. The sequence is that of Chaperonin GroEL 1 from Prochlorococcus marinus subsp. pastoris (strain CCMP1986 / NIES-2087 / MED4).